The primary structure comprises 117 residues: Anti-sigma F factor antagonist (117 aa).

The 111-residue stretch at 3 to 113 (LGIDMNVKES…QSEQQALLTL (111 aa)) folds into the STAS domain. Serine 58 carries the phosphoserine modification.

The protein belongs to the anti-sigma-factor antagonist family. In terms of processing, phosphorylated by SpoIIAB on a serine residue.

Functionally, in the phosphorylated form it could act as an anti-anti-sigma factor that counteracts SpoIIAB and thus releases sigma f from inhibition. The sequence is that of Anti-sigma F factor antagonist (spoIIAA) from Bacillus subtilis (strain 168).